The primary structure comprises 502 residues: Cardiolipin synthase (502 aa).

3 helical membrane-spanning segments follow: residues 7–27 (VAILIVIVGVLLTLTHDYWGG), 29–49 (LLGIFSVLISCSVVFIAFVIS), and 59–79 (IAWLAVLGSFPFLGFLFYLLF). 2 consecutive PLD phosphodiesterase domains span residues 237-264 (INFRNHRKIIVIDGGVGFVGGLNIGDEY) and 415-442 (EKGFLHSKVIVVDGELASIGTANMDMRS). Catalysis depends on residues H242, K244, D249, H420, K422, and D427.

It belongs to the phospholipase D family. Cardiolipin synthase subfamily.

The protein resides in the cell membrane. It catalyses the reaction 2 a 1,2-diacyl-sn-glycero-3-phospho-(1'-sn-glycerol) = a cardiolipin + glycerol. Functionally, catalyzes the reversible phosphatidyl group transfer from one phosphatidylglycerol molecule to another to form cardiolipin (CL) (diphosphatidylglycerol) and glycerol. This is Cardiolipin synthase (cls) from Geobacillus thermodenitrificans (strain NG80-2).